We begin with the raw amino-acid sequence, 155 residues long: UPF0178 protein Gmet_1725 (155 aa).

This sequence belongs to the UPF0178 family.

This is UPF0178 protein Gmet_1725 from Geobacter metallireducens (strain ATCC 53774 / DSM 7210 / GS-15).